A 418-amino-acid polypeptide reads, in one-letter code: Odorant receptor 13a (418 aa).

The Cytoplasmic segment spans residues 1–38; it reads MFYSYPYKALSFPIQCVWLKLNGSWPLTESSRPWRSQS. Residues 39 to 59 traverse the membrane as a helical segment; the sequence is LLATAYIVWAWYVIASVGITI. The Extracellular segment spans residues 60–70; sequence SYQTAFLLNNL. Residue Asn69 is glycosylated (N-linked (GlcNAc...) asparagine). A helical transmembrane segment spans residues 71–91; it reads SDIIITTENCCTTFMGVLNFV. Residues 92 to 140 lie on the Cytoplasmic side of the membrane; that stretch reads RLIHLRLNQRKFRQLIENFSYEIWIPNSSKNNVAAECRRRMVTFSIMTS. The chain crosses the membrane as a helical span at residues 141 to 161; that stretch reads LLACLIIMYCVLPLVEIFFGP. Residues 162–195 are Extracellular-facing; it reads AFDAQNKPFPYKMIFPYDAQSSWIRYVMTYIFTS. The chain crosses the membrane as a helical span at residues 196 to 216; it reads YAGICVVTTLFAEDTILGFFI. Over 217 to 273 the chain is Cytoplasmic; sequence TYTCGQFHLLHQRIAGLFAGSNAELAESIQLERLKRIVEKHNNIISFAKRLEDFFNP. The helical transmembrane segment at 274–294 threads the bilayer; it reads ILLANLMISSVLICMVGFQIV. Over 295-299 the chain is Extracellular; it reads TGKNM. The chain crosses the membrane as a helical span at residues 300–320; the sequence is FIGDYVKFIIYISSALSQLYV. Residues 321 to 385 lie on the Cytoplasmic side of the membrane; the sequence is LCENGDALIK…PVRITAFKFS (65 aa). The chain crosses the membrane as a helical span at residues 386–406; sequence TLSLQSFTAILSTSISYFTLL. At 407 to 418 the chain is on the extracellular side; that stretch reads RSVYFDDEKKLD.

This sequence belongs to the insect chemoreceptor superfamily. Heteromeric odorant receptor channel (TC 1.A.69) family. Or1a subfamily. As to quaternary structure, interacts with Orco. Complexes exist early in the endomembrane system in olfactory sensory neurons (OSNs), coupling these complexes to the conserved ciliary trafficking pathway. As to expression, expressed in olfactory sensory neurons in the antenna.

It localises to the cell membrane. Its function is as follows. Odorant receptor which mediates acceptance or avoidance behavior, depending on its substrates. The odorant receptor repertoire encodes a large collection of odor stimuli that vary widely in identity, intensity, and duration. May form a complex with Orco to form odorant-sensing units, providing sensitive and prolonged odorant signaling and calcium permeability. Involved in the behavioral responses to octanol, nonanol, and pentyl acetate. The polypeptide is Odorant receptor 13a (Or13a) (Drosophila melanogaster (Fruit fly)).